The sequence spans 226 residues: Transcription repressor OFP12 (226 aa).

Residues 68 to 87 show a composition bias toward low complexity; it reads SSTFTASTSTAANSSSSSAS. Residues 68–104 are disordered; the sequence is SSTFTASTSTAANSSSSSASYDDSDNYGFAPDDDSPP. The OVATE domain occupies 152 to 217; it reads VKHYVQSPDP…IRAFADILVS (66 aa).

In terms of assembly, interacts with KNAT1, KNAT2, KNAT3 and KNAT4. Expressed in roots, shoots, stems, flower buds and siliques.

Its subcellular location is the nucleus. Its function is as follows. Transcriptional repressor that regulates multiple aspects of plant growth and development through the regulation of BEL1-LIKE (BLH) and KNOX TALE (KNAT) homeodomain transcription factors. This chain is Transcription repressor OFP12 (OFP12), found in Arabidopsis thaliana (Mouse-ear cress).